We begin with the raw amino-acid sequence, 469 residues long: Putative dipeptidase SH1171 (469 aa).

His84 lines the Zn(2+) pocket. Asp86 is a catalytic residue. Position 115 (Asp115) interacts with Zn(2+). Residue Glu149 is the Proton acceptor of the active site. The Zn(2+) site is built by Glu150, Asp173, and His440.

The protein belongs to the peptidase M20A family. Requires Zn(2+) as cofactor.

This is Putative dipeptidase SH1171 from Staphylococcus haemolyticus (strain JCSC1435).